The primary structure comprises 291 residues: ATP synthase gamma chain (291 aa).

Belongs to the ATPase gamma chain family. F-type ATPases have 2 components, CF(1) - the catalytic core - and CF(0) - the membrane proton channel. CF(1) has five subunits: alpha(3), beta(3), gamma(1), delta(1), epsilon(1). CF(0) has three main subunits: a, b and c.

The protein localises to the cell membrane. In terms of biological role, produces ATP from ADP in the presence of a proton gradient across the membrane. The gamma chain is believed to be important in regulating ATPase activity and the flow of protons through the CF(0) complex. This Streptococcus uberis (strain ATCC BAA-854 / 0140J) protein is ATP synthase gamma chain.